Consider the following 484-residue polypeptide: E-selectin (484 aa).

Residues 1 to 22 form the signal peptide; that stretch reads MIASQFLSALPLVLLLLRESGA. In terms of domain architecture, C-type lectin spans 23–140; it reads WSYSASTETM…CSKKKLALCY (118 aa). Residues 23–429 lie on the Extracellular side of the membrane; sequence WSYSASTETM…CEAPAESKIP (407 aa). 14 disulfides stabilise this stretch: Cys41–Cys139, Cys112–Cys131, Cys144–Cys155, Cys149–Cys164, Cys166–Cys175, Cys181–Cys222, Cys194–Cys204, Cys208–Cys235, Cys240–Cys285, Cys271–Cys298, Cys303–Cys348, Cys334–Cys361, Cys366–Cys407, and Cys393–Cys420. 3 N-linked (GlcNAc...) asparagine glycosylation sites follow: Asn61, Asn65, and Asn79. 3 residues coordinate Ca(2+): Glu102, Asn104, and Glu110. A carbohydrate contacts are provided by residues 102–110, 114–119, and 127–129; these read EPNNKQSNE, EIYIKR, and NDE. Ca(2+)-binding residues include Asn127 and Asp128. The EGF-like domain maps to 141-176; sequence TAACTPTSCSGHGECIETINSSTCQCYPGFRGLQCE. An N-linked (GlcNAc...) asparagine glycan is attached at Asn160. Sushi domains follow at residues 179–237, 251–300, 301–363, and 364–422; these read VECD…TCKA, VSCN…VCKA, VKCP…SCQV, and VQCS…TCEA. N-linked (GlcNAc...) asparagine glycosylation occurs at Asn201. The N-linked (GlcNAc...) asparagine glycan is linked to Asn254. Asn376 and Asn400 each carry an N-linked (GlcNAc...) asparagine glycan. A helical membrane pass occupies residues 430 to 451; that stretch reads LAMGLAAGGVSFMTSASFLLWL. Residues 452 to 484 lie on the Cytoplasmic side of the membrane; the sequence is LKRLRKRAKKFVPSSSSECLQPNGSYQMPSDLI.

The protein belongs to the selectin/LECAM family. As to quaternary structure, interacts with SELPLG/PSGL1 and PODXL2 through the sialyl Lewis X epitope. SELPLG sulfation appears not to be required for this interaction.

It is found in the cell membrane. In terms of biological role, cell-surface glycoprotein having a role in immunoadhesion. Mediates in the adhesion of blood neutrophils in cytokine-activated endothelium through interaction with SELPLG/PSGL1. May have a role in capillary morphogenesis. This is E-selectin (SELE) from Sus scrofa (Pig).